Consider the following 542-residue polypeptide: Membrane protein insertase YidC (542 aa).

The chain crosses the membrane as a helical span at residues 5–25; sequence TLLAVILSITVFYVFSLLFAP. Residues 33-64 form a disordered region; sequence ESTGQAVSAPVSAGQPVAGGVQPSASAPSLPA. The span at 54 to 64 shows a compositional bias: low complexity; the sequence is QPSASAPSLPA. The next 5 helical transmembrane spans lie at 323 to 343, 345 to 365, 419 to 439, 463 to 483, and 500 to 520; these read LDLGWFTVIAKPLLYTLKYFY, YVGNYGVAIIIITIILKALFF, LPMLVQIPVFFALYKALMFSI, MLGLPFVIGPLPLLMGATMFI, and MLALPVVFTFMFLNFPSGLVL.

Belongs to the OXA1/ALB3/YidC family. Type 1 subfamily. In terms of assembly, interacts with the Sec translocase complex via SecD. Specifically interacts with transmembrane segments of nascent integral membrane proteins during membrane integration.

Its subcellular location is the cell inner membrane. Functionally, required for the insertion and/or proper folding and/or complex formation of integral membrane proteins into the membrane. Involved in integration of membrane proteins that insert both dependently and independently of the Sec translocase complex, as well as at least some lipoproteins. Aids folding of multispanning membrane proteins. The chain is Membrane protein insertase YidC from Pelobacter propionicus (strain DSM 2379 / NBRC 103807 / OttBd1).